The sequence spans 310 residues: HTH-type transcriptional regulator CbbR (310 aa).

The 58-residue stretch at 7 to 64 folds into the HTH lysR-type domain; the sequence is ITLKQLRALVAVAGSASLTGGATRLGLTPPAIHSQIRNLEEAFGVPLLHRPPETGSFT. Residues 24 to 43 constitute a DNA-binding region (H-T-H motif); it reads LTGGATRLGLTPPAIHSQIR.

It belongs to the LysR transcriptional regulatory family.

Transcriptional activator for the cbb operon for RuBisCO and other Calvin cycle genes. The protein is HTH-type transcriptional regulator CbbR (cbbR) of Cereibacter sphaeroides (Rhodobacter sphaeroides).